We begin with the raw amino-acid sequence, 127 residues long: UPF0325 protein VS_2356 (127 aa).

It belongs to the UPF0325 family.

The chain is UPF0325 protein VS_2356 from Vibrio atlanticus (strain LGP32) (Vibrio splendidus (strain Mel32)).